A 538-amino-acid chain; its full sequence is Cryptic outer membrane porin BglH (538 aa).

The signal sequence occupies residues 1-25 (MFRRNLITSAILLMAPLAFSAQSLA). Residues 52 to 82 (KDEEKKKYTPATVNRSVSTNDQGYAANPFPT) form a disordered region. The segment covering 62 to 73 (ATVNRSVSTNDQ) has biased composition (polar residues).

Belongs to the porin LamB (TC 1.B.3) family. As to quaternary structure, homomonomer; no physical evidence of a homotrimer has been found, however conductance experiments suggest it may be a homotrimer. The monomer probably consists of 18 antiparallel beta-strands.

The protein localises to the cell outer membrane. Its function is as follows. Part of a cryptic operon that is poorly expressed in vivo. May be an ancestral sugar porin with a broad carbohydrate specificity; it binds aromatic beta-D-glucosides such as arbutin and salicin, but with low affinity compared to the binding of maltooligosaccharides to the LamB porin. The polypeptide is Cryptic outer membrane porin BglH (bglH) (Escherichia coli (strain K12)).